A 349-amino-acid polypeptide reads, in one-letter code: D-alanine--D-alanine ligase (349 aa).

The ATP-grasp domain occupies 132–335 (KHVFEAVGVP…YSDLIEKLVD (204 aa)). Residue 162 to 217 (VEKLDFPVFVKPANMGSSVGISKVDDLADLQPALSEAYKYDNRVVIEQGVDAREIE) participates in ATP binding. Asp289, Glu302, and Asn304 together coordinate Mg(2+).

It belongs to the D-alanine--D-alanine ligase family. It depends on Mg(2+) as a cofactor. Requires Mn(2+) as cofactor.

The protein localises to the cytoplasm. It carries out the reaction 2 D-alanine + ATP = D-alanyl-D-alanine + ADP + phosphate + H(+). It functions in the pathway cell wall biogenesis; peptidoglycan biosynthesis. Its function is as follows. Cell wall formation. The chain is D-alanine--D-alanine ligase from Lactococcus lactis subsp. cremoris (strain MG1363).